A 189-amino-acid chain; its full sequence is ADP-ribosylation factor H (189 aa).

Residues D34 to T40, D75 to Q79, and N134 to D137 contribute to the GTP site.

This sequence belongs to the small GTPase superfamily. Arf family.

The protein localises to the golgi apparatus. In terms of biological role, GTP-binding protein that may be involved in protein trafficking. May modulate vesicle budding and uncoating within the Golgi apparatus. In Dictyostelium discoideum (Social amoeba), this protein is ADP-ribosylation factor H (arrH).